The following is a 215-amino-acid chain: NADH-quinone oxidoreductase subunit C (215 aa).

It belongs to the complex I 30 kDa subunit family. NDH-1 is composed of 14 different subunits. Subunits NuoB, C, D, E, F, and G constitute the peripheral sector of the complex.

It localises to the cell inner membrane. It catalyses the reaction a quinone + NADH + 5 H(+)(in) = a quinol + NAD(+) + 4 H(+)(out). Functionally, NDH-1 shuttles electrons from NADH, via FMN and iron-sulfur (Fe-S) centers, to quinones in the respiratory chain. The immediate electron acceptor for the enzyme in this species is believed to be ubiquinone. Couples the redox reaction to proton translocation (for every two electrons transferred, four hydrogen ions are translocated across the cytoplasmic membrane), and thus conserves the redox energy in a proton gradient. In Methylobacterium radiotolerans (strain ATCC 27329 / DSM 1819 / JCM 2831 / NBRC 15690 / NCIMB 10815 / 0-1), this protein is NADH-quinone oxidoreductase subunit C.